The following is a 460-amino-acid chain: Solute carrier family 52, riboflavin transporter, member 3 (460 aa).

Topologically, residues Met1–His6 are cytoplasmic. The helical transmembrane segment at Leu7–Leu27 threads the bilayer. The Extracellular segment spans residues Pro28–Ala37. Residues Trp38 to Val58 traverse the membrane as a helical segment. Residues Thr59–Glu71 are Cytoplasmic-facing. Residues Val72 to Leu92 traverse the membrane as a helical segment. Residues Trp93–Ser105 lie on the Extracellular side of the membrane. N-linked (GlcNAc...) asparagine glycosylation is present at Asn94. A helical membrane pass occupies residues Val106–Phe126. The Cytoplasmic portion of the chain corresponds to Leu127–Tyr137. Residues Leu138–Val158 form a helical membrane-spanning segment. At Gln159 to Pro211 the chain is on the extracellular side. A glycan (N-linked (GlcNAc...) asparagine) is linked at Asn168. The helical transmembrane segment at Leu212–Leu232 threads the bilayer. Over Gln233–Leu291 the chain is Cytoplasmic. Phosphoserine occurs at positions 242 and 266. A helical transmembrane segment spans residues Ala292–Val312. Residues Gln313–His326 are Extracellular-facing. A helical transmembrane segment spans residues Leu327 to Pro347. At Asn348 to Ser350 the chain is on the cytoplasmic side. A helical transmembrane segment spans residues Leu351–Met371. Topologically, residues Ala372 to Glu387 are extracellular. An intrachain disulfide couples Cys377 to Cys454. A helical membrane pass occupies residues Val388–Leu408. Residues Gly409–Ser418 lie on the Cytoplasmic side of the membrane. Residues Ala419–Phe439 traverse the membrane as a helical segment. At Pro440–Val460 the chain is on the extracellular side.

This sequence belongs to the riboflavin transporter family. As to expression, within the small intestine, it is particularly expressed in the jujenum and the ileum. Almost negligible expression in the stomach, duodenum, and large intestine.

Its subcellular location is the cell membrane. The enzyme catalyses riboflavin(in) = riboflavin(out). Functionally, plasma membrane transporter mediating the uptake by cells of the water soluble vitamin B2/riboflavin that plays a key role in biochemical oxidation-reduction reactions of the carbohydrate, lipid, and amino acid metabolism. The polypeptide is Solute carrier family 52, riboflavin transporter, member 3 (Slc52a3) (Mus musculus (Mouse)).